The following is a 543-amino-acid chain: Intermediate filament protein ifb-2 (543 aa).

Over residues 1 to 10 the composition is skewed to polar residues; it reads MSAVSYSMHR. A disordered region spans residues 1-27; that stretch reads MSAVSYSMHRTTTTTSSSSHGGVSAGH. A head region spans residues 1–42; the sequence is MSAVSYSMHRTTTTTSSSSHGGVSAGHAAEEFVASAEREKQE. The IF rod domain maps to 39–388; that stretch reads EKQEMQQLNS…KLVESEEGRF (350 aa). Positions 43 to 74 are coil 1A; it reads MQQLNSRLEVYISRVRQLEDRNKELVIELDTL. Residues 75 to 88 are linker 1; that stretch reads RGSLGNDIGQIKFK. The segment at 89–223 is coil 1B; that stretch reads FNDSLVKVRR…RIHSQEITEL (135 aa). The tract at residues 224–240 is linker 12; it reads RTLLAQAPADTREFFKN. Residues 241–387 are coil 2; that stretch reads ELALAIREIK…RKLVESEEGR (147 aa). The segment at 388–542 is tail; that stretch reads FTHVGQGVVV…SHIQTTVASS (155 aa). Residues 420–538 enclose the LTD domain; that stretch reads TRSSFKRHAK…IEKASHIQTT (119 aa).

Belongs to the intermediate filament family. As to expression, expression is restricted to a discrete circumferential subapical layer within the intestinal terminal web (known as the 'endotube'); this layer joins directly to the apical junction complexes that connect adjacent gut cells.

The protein localises to the cytoplasm. In terms of biological role, cytoplasmic intermediate filaments provide mechanical strength to cells. Not essential protein. Component of the terminal web (organelle-depleted, intermediate filament-rich layer of cytoplasm that underlies the apical microvilli of polarized epithelial cells) in embryonic through to adult gut cells. Correct localization of filaments requires let-413. This is Intermediate filament protein ifb-2 (ifb-2) from Caenorhabditis elegans.